We begin with the raw amino-acid sequence, 160 residues long: 2-C-methyl-D-erythritol 2,4-cyclodiphosphate synthase (160 aa).

Residues aspartate 10 and histidine 12 each coordinate a divalent metal cation. 4-CDP-2-C-methyl-D-erythritol 2-phosphate-binding positions include 10 to 12 and 36 to 37; these read DVH and HS. Histidine 44 provides a ligand contact to a divalent metal cation. 4-CDP-2-C-methyl-D-erythritol 2-phosphate is bound by residues 58 to 60, 63 to 67, and arginine 144; these read DIG and FPDTD.

It belongs to the IspF family. In terms of assembly, homotrimer. A divalent metal cation serves as cofactor.

The catalysed reaction is 4-CDP-2-C-methyl-D-erythritol 2-phosphate = 2-C-methyl-D-erythritol 2,4-cyclic diphosphate + CMP. The protein operates within isoprenoid biosynthesis; isopentenyl diphosphate biosynthesis via DXP pathway; isopentenyl diphosphate from 1-deoxy-D-xylulose 5-phosphate: step 4/6. Involved in the biosynthesis of isopentenyl diphosphate (IPP) and dimethylallyl diphosphate (DMAPP), two major building blocks of isoprenoid compounds. Catalyzes the conversion of 4-diphosphocytidyl-2-C-methyl-D-erythritol 2-phosphate (CDP-ME2P) to 2-C-methyl-D-erythritol 2,4-cyclodiphosphate (ME-CPP) with a corresponding release of cytidine 5-monophosphate (CMP). The protein is 2-C-methyl-D-erythritol 2,4-cyclodiphosphate synthase of Dechloromonas aromatica (strain RCB).